A 460-amino-acid polypeptide reads, in one-letter code: Mogroside I-E synthase (460 aa).

The active-site Proton acceptor is the histidine 25. Aspartate 114 functions as the Charge relay in the catalytic mechanism. 9 residues coordinate UDP-alpha-D-glucose: serine 286, cysteine 339, glutamine 341, tryptophan 359, asparagine 360, serine 361, glutamate 364, aspartate 380, and glutamine 381.

Belongs to the UDP-glycosyltransferase family. Highly expressed in young fruits 15 days after anthesis (15-DAA).

The catalysed reaction is mogrol + UDP-alpha-D-glucose = mogroside IE + UDP + H(+). It carries out the reaction mogroside I-A1 + UDP-alpha-D-glucose = mogroside IIE + UDP + H(+). It catalyses the reaction mogroside II-A1 + UDP-alpha-D-glucose = mogroside IIIX + UDP + H(+). The enzyme catalyses mogroside II-A + UDP-alpha-D-glucose = mogroside III + UDP + H(+). The catalysed reaction is mogroside III-A1 + UDP-alpha-D-glucose = siamenoside I + UDP + H(+). It functions in the pathway secondary metabolite biosynthesis; terpenoid biosynthesis. Functionally, UDP-glycosyltransferase involved in the biosynthesis of cucurbitacin and mogroside tetracyclic triterpene natural products (e.g. siamenoside I and mogrosides IV, V and VI). Cucurbitacins have cytotoxic properties and exhibit deterrent taste as a defense barrier against herbivores. Mogrosides are nonsugar highly oxygenated compounds used as high-intensity zero-calorie sweeteners; they also possess pharmacological properties such as regulating immunity, lowering blood sugar and lipid levels, protecting the liver, and acting as antioxidants and antitumor agents. Catalyzes the C3 primary glucosylation of mogrol, mogroside I-A1, mogroside II-A1, mogroside II-A and mogroside III-A1. The polypeptide is Mogroside I-E synthase (Siraitia grosvenorii (Monk's fruit)).